Reading from the N-terminus, the 336-residue chain is Dihydroorotate dehydrogenase (quinone) (336 aa).

Residues 62 to 66 (AGLDK) and Thr-86 each bind FMN. Lys-66 contacts substrate. Residue 111–115 (NRMGF) coordinates substrate. 2 residues coordinate FMN: Asn-139 and Asn-172. Substrate is bound at residue Asn-172. The active-site Nucleophile is Ser-175. A substrate-binding site is contributed by Asn-177. FMN contacts are provided by Lys-217 and Thr-245. Residue 246 to 247 (NT) coordinates substrate. Residues Gly-268, Gly-297, and 318–319 (YS) contribute to the FMN site.

This sequence belongs to the dihydroorotate dehydrogenase family. Type 2 subfamily. Monomer. Requires FMN as cofactor.

The protein localises to the cell membrane. The enzyme catalyses (S)-dihydroorotate + a quinone = orotate + a quinol. The protein operates within pyrimidine metabolism; UMP biosynthesis via de novo pathway; orotate from (S)-dihydroorotate (quinone route): step 1/1. Catalyzes the conversion of dihydroorotate to orotate with quinone as electron acceptor. This chain is Dihydroorotate dehydrogenase (quinone), found in Hamiltonella defensa subsp. Acyrthosiphon pisum (strain 5AT).